A 126-amino-acid polypeptide reads, in one-letter code: MKGLEFVFLAAGSVLGAFLRYKITESPLIFNTLPLNVLIVNVIGAFILGVFIVLSQQWNLDGRYSLFAAIGFCGSLTTMSSFALDSSNLLENNQYGALAANIIVNVGLSIGALIGGKSLMSTIISN.

3 consecutive transmembrane segments (helical) span residues 33–53, 64–84, and 96–116; these read LPLN…VFIV, YSLF…SFAL, and GALA…LIGG. 2 residues coordinate Na(+): Gly74 and Thr77.

This sequence belongs to the fluoride channel Fluc/FEX (TC 1.A.43) family.

The protein localises to the cell membrane. The enzyme catalyses fluoride(in) = fluoride(out). Na(+) is not transported, but it plays an essential structural role and its presence is essential for fluoride channel function. In terms of biological role, fluoride-specific ion channel. Important for reducing fluoride concentration in the cell, thus reducing its toxicity. The protein is Fluoride-specific ion channel FluC of Nitrosopumilus maritimus (strain SCM1).